The following is a 242-amino-acid chain: MPDYIRISRAADSLRDIKITPHFLPHTDGSCLIECGNTKVICTASIDENVPPFLRGKNQGWVTAEYGMLPASTASRMLREASAGKQSGRTQEIQRLIGRSLRAVVDMEKLGERQILIDCDVIQADGGTRTASITGAFVALQIAVGKLVSDGILSENPIREAVAAVSVGVVNGVPLLDLDYPEDSGCDSDVNIVMTASGKIIEIQGTAEDAPFSLDELGKLVALAQKGIGELLQHQQNALSAA.

Residues R89 and 127–129 contribute to the phosphate site; that span reads GTR.

It belongs to the RNase PH family. As to quaternary structure, homohexameric ring arranged as a trimer of dimers.

It carries out the reaction tRNA(n+1) + phosphate = tRNA(n) + a ribonucleoside 5'-diphosphate. Its function is as follows. Phosphorolytic 3'-5' exoribonuclease that plays an important role in tRNA 3'-end maturation. Removes nucleotide residues following the 3'-CCA terminus of tRNAs; can also add nucleotides to the ends of RNA molecules by using nucleoside diphosphates as substrates, but this may not be physiologically important. Probably plays a role in initiation of 16S rRNA degradation (leading to ribosome degradation) during starvation. In Neisseria meningitidis serogroup B (strain ATCC BAA-335 / MC58), this protein is Ribonuclease PH.